Here is a 45-residue protein sequence, read N- to C-terminus: Conotoxin reg3.12 (45 aa).

The propeptide occupies D1–K31. 3 disulfide bridges follow: C32/C44, C33/C42, and C38/C45.

This sequence belongs to the conotoxin M superfamily. Expressed by the venom duct.

It is found in the secreted. This chain is Conotoxin reg3.12, found in Conus regius (Crown cone).